The primary structure comprises 134 residues: MVVAPYLAVAIGGSLGAMSRYLVTIMAQNAWGIKFPYGTLLVNTLGSFLAGFFLIVLVGRFSAEESFRLFLFTGFLGAFTTFSSFAAESLFMFEQGYWFKLITNILVNNVGSLSMVFIGTLVAKYVLLGHQGSN.

The next 4 membrane-spanning stretches (helical) occupy residues 7–27, 38–58, 69–89, and 110–130; these read LAVAIGGSLGAMSRYLVTIMA, GTLLVNTLGSFLAGFFLIVLV, LFLFTGFLGAFTTFSSFAAES, and VGSLSMVFIGTLVAKYVLLGH. Na(+) is bound by residues G77 and T80.

This sequence belongs to the fluoride channel Fluc/FEX (TC 1.A.43) family.

The protein localises to the cell inner membrane. The enzyme catalyses fluoride(in) = fluoride(out). Its activity is regulated as follows. Na(+) is not transported, but it plays an essential structural role and its presence is essential for fluoride channel function. Functionally, fluoride-specific ion channel. Important for reducing fluoride concentration in the cell, thus reducing its toxicity. This is Fluoride-specific ion channel FluC from Legionella pneumophila (strain Paris).